The chain runs to 104 residues: Large ribosomal subunit protein bL21 (104 aa).

The protein belongs to the bacterial ribosomal protein bL21 family. Part of the 50S ribosomal subunit. Contacts protein L20.

Functionally, this protein binds to 23S rRNA in the presence of protein L20. The polypeptide is Large ribosomal subunit protein bL21 (Nitrosococcus oceani (strain ATCC 19707 / BCRC 17464 / JCM 30415 / NCIMB 11848 / C-107)).